Reading from the N-terminus, the 228-residue chain is Thiamine-phosphate synthase (228 aa).

Residues 57–61 (QLRDK) and N89 contribute to the 4-amino-2-methyl-5-(diphosphooxymethyl)pyrimidine site. Positions 90 and 109 each coordinate Mg(2+). 4-amino-2-methyl-5-(diphosphooxymethyl)pyrimidine is bound at residue S128. 154-156 (TPS) contacts 2-[(2R,5Z)-2-carboxy-4-methylthiazol-5(2H)-ylidene]ethyl phosphate. K157 provides a ligand contact to 4-amino-2-methyl-5-(diphosphooxymethyl)pyrimidine. 2-[(2R,5Z)-2-carboxy-4-methylthiazol-5(2H)-ylidene]ethyl phosphate is bound by residues G185 and 205 to 206 (IS).

This sequence belongs to the thiamine-phosphate synthase family. Requires Mg(2+) as cofactor.

The catalysed reaction is 2-[(2R,5Z)-2-carboxy-4-methylthiazol-5(2H)-ylidene]ethyl phosphate + 4-amino-2-methyl-5-(diphosphooxymethyl)pyrimidine + 2 H(+) = thiamine phosphate + CO2 + diphosphate. It carries out the reaction 2-(2-carboxy-4-methylthiazol-5-yl)ethyl phosphate + 4-amino-2-methyl-5-(diphosphooxymethyl)pyrimidine + 2 H(+) = thiamine phosphate + CO2 + diphosphate. It catalyses the reaction 4-methyl-5-(2-phosphooxyethyl)-thiazole + 4-amino-2-methyl-5-(diphosphooxymethyl)pyrimidine + H(+) = thiamine phosphate + diphosphate. It functions in the pathway cofactor biosynthesis; thiamine diphosphate biosynthesis; thiamine phosphate from 4-amino-2-methyl-5-diphosphomethylpyrimidine and 4-methyl-5-(2-phosphoethyl)-thiazole: step 1/1. Functionally, condenses 4-methyl-5-(beta-hydroxyethyl)thiazole monophosphate (THZ-P) and 2-methyl-4-amino-5-hydroxymethyl pyrimidine pyrophosphate (HMP-PP) to form thiamine monophosphate (TMP). This Roseiflexus castenholzii (strain DSM 13941 / HLO8) protein is Thiamine-phosphate synthase.